A 115-amino-acid polypeptide reads, in one-letter code: Large ribosomal subunit protein bL20 (115 aa).

This sequence belongs to the bacterial ribosomal protein bL20 family.

Its function is as follows. Binds directly to 23S ribosomal RNA and is necessary for the in vitro assembly process of the 50S ribosomal subunit. It is not involved in the protein synthesizing functions of that subunit. The protein is Large ribosomal subunit protein bL20 of Prochlorococcus marinus (strain AS9601).